The sequence spans 230 residues: Thymine/uracil-DNA glycosylase (230 aa).

Cys-204, Cys-211, Cys-214, and Cys-221 together coordinate [4Fe-4S] cluster.

It belongs to the Nth/MutY family. The cofactor is [4Fe-4S] cluster.

It carries out the reaction Hydrolyzes mismatched double-stranded DNA and polynucleotides, releasing free thymine.. DNA glycosylase that excises thymine from T/G mismatches and uracil from U/G mismatches. Can also process T/GO and U/GO, but not A/G, T/C and U/C. Has weak AP lyase activity. The polypeptide is Thymine/uracil-DNA glycosylase (Pyrobaculum aerophilum (strain ATCC 51768 / DSM 7523 / JCM 9630 / CIP 104966 / NBRC 100827 / IM2)).